A 187-amino-acid chain; its full sequence is Orotate phosphoribosyltransferase (187 aa).

5-phospho-alpha-D-ribose 1-diphosphate contacts are provided by residues Arg-98, Lys-99, Lys-102, His-104, and 128–136; that span reads EDVTTTGGS. Residues Thr-132 and Arg-160 each contribute to the orotate site.

The protein belongs to the purine/pyrimidine phosphoribosyltransferase family. PyrE subfamily. As to quaternary structure, homodimer. Mg(2+) is required as a cofactor.

The enzyme catalyses orotidine 5'-phosphate + diphosphate = orotate + 5-phospho-alpha-D-ribose 1-diphosphate. It functions in the pathway pyrimidine metabolism; UMP biosynthesis via de novo pathway; UMP from orotate: step 1/2. Functionally, catalyzes the transfer of a ribosyl phosphate group from 5-phosphoribose 1-diphosphate to orotate, leading to the formation of orotidine monophosphate (OMP). The polypeptide is Orotate phosphoribosyltransferase (Bradyrhizobium diazoefficiens (strain JCM 10833 / BCRC 13528 / IAM 13628 / NBRC 14792 / USDA 110)).